Here is a 353-residue protein sequence, read N- to C-terminus: Probable dual-specificity RNA methyltransferase RlmN (353 aa).

Glutamate 90 functions as the Proton acceptor in the catalytic mechanism. Residues tyrosine 96–aspartate 326 enclose the Radical SAM core domain. An intrachain disulfide couples cysteine 103 to cysteine 331. [4Fe-4S] cluster contacts are provided by cysteine 110, cysteine 114, and cysteine 117. S-adenosyl-L-methionine-binding positions include glycine 157–glutamate 158, serine 189, serine 212–histidine 214, and asparagine 288. Residue cysteine 331 is the S-methylcysteine intermediate of the active site.

This sequence belongs to the radical SAM superfamily. RlmN family. It depends on [4Fe-4S] cluster as a cofactor.

The protein localises to the cytoplasm. The enzyme catalyses adenosine(2503) in 23S rRNA + 2 reduced [2Fe-2S]-[ferredoxin] + 2 S-adenosyl-L-methionine = 2-methyladenosine(2503) in 23S rRNA + 5'-deoxyadenosine + L-methionine + 2 oxidized [2Fe-2S]-[ferredoxin] + S-adenosyl-L-homocysteine. It carries out the reaction adenosine(37) in tRNA + 2 reduced [2Fe-2S]-[ferredoxin] + 2 S-adenosyl-L-methionine = 2-methyladenosine(37) in tRNA + 5'-deoxyadenosine + L-methionine + 2 oxidized [2Fe-2S]-[ferredoxin] + S-adenosyl-L-homocysteine. In terms of biological role, specifically methylates position 2 of adenine 2503 in 23S rRNA and position 2 of adenine 37 in tRNAs. In Clostridium beijerinckii (strain ATCC 51743 / NCIMB 8052) (Clostridium acetobutylicum), this protein is Probable dual-specificity RNA methyltransferase RlmN.